The following is an 86-amino-acid chain: Kappa-theraphotoxin-Cg1a 3 (86 aa).

A signal peptide spans 1–21 (MKVSVLITLAVLGVMFVWASA). A propeptide spanning residues 22–50 (AELEERGSDQRDSPAWLKSMERIFRSEER) is cleaved from the precursor. 3 disulfides stabilise this stretch: Cys52/Cys66, Cys59/Cys71, and Cys65/Cys78. At Phe84 the chain carries Phenylalanine amide.

Belongs to the neurotoxin 10 (Hwtx-1) family. 28 (Jztx-11) subfamily. As to expression, expressed by the venom gland.

The protein resides in the secreted. In terms of biological role, this toxin acts as a voltage-dependent gating-modifier. It inhibits the sodium conductance (IC(50)=124 nM) and slows the fast inactivation (EC(50)=1180 nM) of Nav1.5/SCN5A. It significantly shifts the activation to more depolarized voltages and decreases the deactivation of Nav1.5 currents upon extreme depolarization, but only slightly affects voltage-dependence of steady-state inactivation. In addition, this toxin causes an approximately five-fold decrease in the rate of recovery from inactivation and an approximately 1.9-fold reduction in the closed-state inactivation rate. This toxin integrates the functions of site 3 toxins (alpha-scorpion toxins) with site 4 toxins (beta-scorpion and spider toxins) by targeting multiple sites on Nav1.5. Also shows inhibition of voltage-gated potassium channels (5 uM completely inhibits Kv2.1/KCNB1, whereas 5 uM moderately inhibits Kv4.2/KCND2 Kv4.1/KCND1 channels). This Chilobrachys guangxiensis (Chinese earth tiger tarantula) protein is Kappa-theraphotoxin-Cg1a 3.